Consider the following 192-residue polypeptide: Phosphomevalonate kinase (192 aa).

ATP-binding positions include 17 to 23 (KRKSGKD) and R141. N170 lines the substrate pocket. 2 residues coordinate ATP: H171 and Q180.

Monomer.

The protein localises to the cytoplasm. The protein resides in the cytosol. The enzyme catalyses (R)-5-phosphomevalonate + ATP = (R)-5-diphosphomevalonate + ADP. Its pathway is isoprenoid biosynthesis; isopentenyl diphosphate biosynthesis via mevalonate pathway; isopentenyl diphosphate from (R)-mevalonate: step 2/3. Catalyzes the reversible ATP-dependent phosphorylation of mevalonate 5-phosphate to produce mevalonate diphosphate and ADP, a key step in the mevalonic acid mediated biosynthesis of isopentenyl diphosphate and other polyisoprenoid metabolites. This chain is Phosphomevalonate kinase (PMVK), found in Bos taurus (Bovine).